Reading from the N-terminus, the 370-residue chain is Cyclin-A3-4 (370 aa).

The protein belongs to the cyclin family. Cyclin AB subfamily. In terms of assembly, interacts with FZR2/CCS52A1, FZR1/CCS52A2 and FZR3/CCS52B.

The sequence is that of Cyclin-A3-4 (CYCA3-4) from Arabidopsis thaliana (Mouse-ear cress).